The primary structure comprises 66 residues: Large ribosomal subunit protein uL29 (66 aa).

It belongs to the universal ribosomal protein uL29 family.

This Lachnospira eligens (strain ATCC 27750 / DSM 3376 / VPI C15-48 / C15-B4) (Eubacterium eligens) protein is Large ribosomal subunit protein uL29.